The chain runs to 269 residues: Phosphonoacetaldehyde hydrolase (269 aa).

Aspartate 10 (nucleophile) is an active-site residue. Mg(2+) is bound by residues aspartate 10 and alanine 12. Lysine 52 (schiff-base intermediate with substrate) is an active-site residue. Aspartate 186 is a binding site for Mg(2+).

It belongs to the HAD-like hydrolase superfamily. PhnX family. As to quaternary structure, homodimer. Mg(2+) is required as a cofactor.

It carries out the reaction phosphonoacetaldehyde + H2O = acetaldehyde + phosphate + H(+). Involved in phosphonate degradation. This is Phosphonoacetaldehyde hydrolase from Salmonella paratyphi A (strain ATCC 9150 / SARB42).